Reading from the N-terminus, the 376-residue chain is Calcium uniporter protein, mitochondrial (376 aa).

The transit peptide at 1 to 34 directs the protein to the mitochondrion; it reads MAAKVCRSVLLLSRSSGAVASSAYPAFGVSSQRH. At 35 to 257 the chain is on the mitochondrial matrix side; it reads QGTKTEALSM…LSKKAERRTT (223 aa). Residues 99-189 form an N-terminal MCU domain region; the sequence is VSVVYQNGLP…TSYLVQPPRR (91 aa). A coiled-coil region spans residues 213-254; that stretch reads TLRIEEHQLNKERELIGRLEDLNSQLQPLEKVKEELSKKAER. A helical transmembrane segment spans residues 258–280; the sequence is WVLWGGMAYMATQFGILARLTWW. The Mitochondrial intermembrane segment spans residues 281 to 289; it reads EYSWDIMEP. Residues 284 to 292 carry the Selectivity filter motif; that stretch reads WDIMEPVTY. Residue Glu288 participates in Ca(2+) binding. A helical transmembrane segment spans residues 290–309; the sequence is VTYFITYGTAMAMYAYFVLT. The tract at residues 309 to 314 is juxtamembrane helix; sequence TRQEYL. At 310-376 the chain is on the mitochondrial matrix side; it reads RQEYLYPDAR…PIQQIDTSKD (67 aa). The stretch at 336–363 forms a coiled coil; sequence FDIEKYNKLKDAIAEAELDLKRLRDPLQ.

Belongs to the MCU (TC 1.A.77) family. As to quaternary structure, homotetramer. Component of the uniplex complex.

Its subcellular location is the mitochondrion inner membrane. The catalysed reaction is Ca(2+)(in) = Ca(2+)(out). Its activity is regulated as follows. MCU channel activity is regulated by the heterodimer composed of micu1 and micu2, which act as calcium-sensors. At low calcium levels, micu1 occludes the pore of the MCU channel, preventing mitochondrial calcium uptake. At higher calcium levels, calcium-binding to micu1 and micu2 induces a conformational change that weakens mcu-micu1 interactions and moves the micu1-micu2 heterodimer away from the pore, allowing calcium permeation through the channel. MCU channel activity is gated by emre/smdt1 via the juxtamembrane helix loop. Inhibited by ruthenium red or its derivative Ru360. In terms of biological role, channel-forming and calcium-conducting subunit of the mitochondrial inner membrane calcium uniporter complex (uniplex), which mediates calcium uptake into the mitochondrial matrix. Mcu channel activity is regulated by the calcium-sensor subunits of the uniplex micu1 and micu2. Mitochondrial calcium homeostasis plays key roles in cellular physiology and regulates ATP production, cytoplasmic calcium signals and activation of cell death pathways. Involved in buffering the amplitude of systolic calcium rises in cardiomyocytes. While dispensable for baseline homeostatic cardiac function, acts as a key regulator of short-term mitochondrial calcium loading underlying a 'fight-or-flight' response during acute stress: acts by mediating a rapid increase of mitochondrial calcium in pacemaker cells. Mitochondrial calcium uptake in skeletal muscle cells is involved in muscle size in adults. This chain is Calcium uniporter protein, mitochondrial, found in Danio rerio (Zebrafish).